Consider the following 313-residue polypeptide: MLDKIIRIATRQSPLALWQAHYVQHLLQANHPGLQVELVPMVTRGDIILDTPLAKVGGKGLFVKELELALLEGRADIAVHSMKDVPIAFPEGLGLVTICERDDPRDAFVSINYAHLDELPAGSIVGTSSLRRQCQLRERRPDLIIRDLRGNVGTRLAKLDKGEYHAIILAVAGLKRLGLETRIRYAMPAEESLPAVGQGAVGIECRLDDNFTRQLLAPLNHRETELRVCAERAMNTRLEGGCQVPIGSYAELDGDTLWLRALVGAPDGSEIIRGERRGPAENAEQMGVELADELLSRGAREILAEVYQDNPPL.

Position 242 is an S-(dipyrrolylmethanemethyl)cysteine (Cys-242).

This sequence belongs to the HMBS family. Monomer. The cofactor is dipyrromethane.

The catalysed reaction is 4 porphobilinogen + H2O = hydroxymethylbilane + 4 NH4(+). The protein operates within porphyrin-containing compound metabolism; protoporphyrin-IX biosynthesis; coproporphyrinogen-III from 5-aminolevulinate: step 2/4. In terms of biological role, tetrapolymerization of the monopyrrole PBG into the hydroxymethylbilane pre-uroporphyrinogen in several discrete steps. The protein is Porphobilinogen deaminase of Yersinia enterocolitica serotype O:8 / biotype 1B (strain NCTC 13174 / 8081).